A 355-amino-acid chain; its full sequence is 3-dehydroquinate synthase (355 aa).

NAD(+) is bound by residues 69–74 (DGEQHK), 103–107 (GVIGD), 127–128 (TT), Lys140, Lys149, and 167–170 (TLQT). Residues Glu182, His245, and His262 each coordinate Zn(2+).

Belongs to the sugar phosphate cyclases superfamily. Dehydroquinate synthase family. The cofactor is Co(2+). Zn(2+) serves as cofactor. It depends on NAD(+) as a cofactor.

The protein localises to the cytoplasm. The catalysed reaction is 7-phospho-2-dehydro-3-deoxy-D-arabino-heptonate = 3-dehydroquinate + phosphate. The protein operates within metabolic intermediate biosynthesis; chorismate biosynthesis; chorismate from D-erythrose 4-phosphate and phosphoenolpyruvate: step 2/7. Its function is as follows. Catalyzes the conversion of 3-deoxy-D-arabino-heptulosonate 7-phosphate (DAHP) to dehydroquinate (DHQ). This Pseudoalteromonas atlantica (strain T6c / ATCC BAA-1087) protein is 3-dehydroquinate synthase.